The primary structure comprises 578 residues: Proteasome-associated ATPase (578 aa).

Residues 8-84 adopt a coiled-coil conformation; the sequence is TAAELRNQVR…LKEEVDRLAQ (77 aa). 267–272 serves as a coordination point for ATP; the sequence is GCGKTL. Residues 577–578 form a docks into pockets in the proteasome alpha-ring region; sequence YL.

Belongs to the AAA ATPase family. As to quaternary structure, homohexamer. Assembles into a hexameric ring structure that caps the 20S proteasome core. Strongly interacts with the prokaryotic ubiquitin-like protein Pup through a hydrophobic interface; the interacting region of ARC lies in its N-terminal coiled-coil domain. There is one Pup binding site per ARC hexamer ring. Upon ATP-binding, the C-terminus of ARC interacts with the alpha-rings of the proteasome core, possibly by binding to the intersubunit pockets.

The protein operates within protein degradation; proteasomal Pup-dependent pathway. Functionally, ATPase which is responsible for recognizing, binding, unfolding and translocation of pupylated proteins into the bacterial 20S proteasome core particle. May be essential for opening the gate of the 20S proteasome via an interaction with its C-terminus, thereby allowing substrate entry and access to the site of proteolysis. Thus, the C-termini of the proteasomal ATPase may function like a 'key in a lock' to induce gate opening and therefore regulate proteolysis. This chain is Proteasome-associated ATPase, found in Kribbella flavida (strain DSM 17836 / JCM 10339 / NBRC 14399).